Here is a 147-residue protein sequence, read N- to C-terminus: Methylmalonyl-CoA mutase homolog (147 aa).

This sequence to methylmalonyl-CoA mutase.

In Alkalihalophilus pseudofirmus (strain ATCC BAA-2126 / JCM 17055 / OF4) (Bacillus pseudofirmus), this protein is Methylmalonyl-CoA mutase homolog.